The following is a 1435-amino-acid chain: DNA polymerase III PolC-type (1435 aa).

Residues Tyr-404–Phe-562 form the Exonuclease domain.

It belongs to the DNA polymerase type-C family. PolC subfamily.

The protein localises to the cytoplasm. It catalyses the reaction DNA(n) + a 2'-deoxyribonucleoside 5'-triphosphate = DNA(n+1) + diphosphate. Functionally, required for replicative DNA synthesis. This DNA polymerase also exhibits 3' to 5' exonuclease activity. The protein is DNA polymerase III PolC-type of Mycoplasmopsis pulmonis (strain UAB CTIP) (Mycoplasma pulmonis).